Reading from the N-terminus, the 489-residue chain is GTPase Der (489 aa).

EngA-type G domains follow at residues 30–199 and 227–403; these read PVVS…KDKP and FRLA…SRSH. Residues 36–43, 85–89, 151–154, 233–240, 280–284, and 345–348 contribute to the GTP site; these read GRQNVGKS, DTPGL, NKAD, GKPNSGKS, DTAGI, and NKWD. The KH-like domain occupies 404 to 488; that stretch reads RKVSTSELNK…PIRLEFRSDR (85 aa).

It belongs to the TRAFAC class TrmE-Era-EngA-EngB-Septin-like GTPase superfamily. EngA (Der) GTPase family. Associates with the 50S ribosomal subunit.

Functionally, GTPase that plays an essential role in the late steps of ribosome biogenesis. This Leptospira interrogans serogroup Icterohaemorrhagiae serovar copenhageni (strain Fiocruz L1-130) protein is GTPase Der.